We begin with the raw amino-acid sequence, 346 residues long: tRNA N6-adenosine threonylcarbamoyltransferase (346 aa).

Fe cation-binding residues include histidine 111 and histidine 115. Substrate-binding positions include 134–138 (LVSGG), aspartate 167, glycine 180, and asparagine 277. Aspartate 305 contributes to the Fe cation binding site.

The protein belongs to the KAE1 / TsaD family. The cofactor is Fe(2+).

The protein localises to the cytoplasm. It carries out the reaction L-threonylcarbamoyladenylate + adenosine(37) in tRNA = N(6)-L-threonylcarbamoyladenosine(37) in tRNA + AMP + H(+). In terms of biological role, required for the formation of a threonylcarbamoyl group on adenosine at position 37 (t(6)A37) in tRNAs that read codons beginning with adenine. Is involved in the transfer of the threonylcarbamoyl moiety of threonylcarbamoyl-AMP (TC-AMP) to the N6 group of A37, together with TsaE and TsaB. TsaD likely plays a direct catalytic role in this reaction. This Bordetella bronchiseptica (strain ATCC BAA-588 / NCTC 13252 / RB50) (Alcaligenes bronchisepticus) protein is tRNA N6-adenosine threonylcarbamoyltransferase.